A 411-amino-acid polypeptide reads, in one-letter code: Putative nickel insertion protein (411 aa).

This sequence belongs to the LarC family.

The chain is Putative nickel insertion protein from Methanothermobacter thermautotrophicus (strain ATCC 29096 / DSM 1053 / JCM 10044 / NBRC 100330 / Delta H) (Methanobacterium thermoautotrophicum).